The primary structure comprises 313 residues: RHOMBOID-like protein 7 (313 aa).

Residues 1–11 (MLSTAAEEDPE) show a composition bias toward acidic residues. The segment at 1 to 24 (MLSTAAEEDPEGGSRETNNGGETT) is disordered. Residues 15 to 24 (RETNNGGETT) are compositionally biased toward polar residues. The next 7 helical transmembrane spans lie at 31–51 (SWII…VMYY), 112–132 (WLHA…YIGV), 143–163 (VGTI…LFLE), 166–186 (ISVG…SELL), 196–216 (GVAI…GTLP), 221–241 (FAHI…LIHP), and 269–289 (LCIV…VILF). The Nucleophile role is filled by Ser-171. His-223 (charge relay system) is an active-site residue.

This sequence belongs to the peptidase S54 family.

It localises to the membrane. The catalysed reaction is Cleaves type-1 transmembrane domains using a catalytic dyad composed of serine and histidine that are contributed by different transmembrane domains.. Probable rhomboid-type serine protease that catalyzes intramembrane proteolysis. May function in embryo development. The sequence is that of RHOMBOID-like protein 7 from Arabidopsis thaliana (Mouse-ear cress).